The following is a 293-amino-acid chain: Formamidopyrimidine-DNA glycosylase (293 aa).

Residue Pro2 is the Schiff-base intermediate with DNA of the active site. The active-site Proton donor is Glu3. The active-site Proton donor; for beta-elimination activity is the Lys58. Positions 104, 123, and 166 each coordinate DNA. The FPG-type zinc-finger motif lies at 257–293; sequence AVYDREGERCRTPGCNGTVKRLVQNGRSTFWCSGCQT. The active-site Proton donor; for delta-elimination activity is Arg283.

The protein belongs to the FPG family. Monomer. Zn(2+) is required as a cofactor.

It catalyses the reaction Hydrolysis of DNA containing ring-opened 7-methylguanine residues, releasing 2,6-diamino-4-hydroxy-5-(N-methyl)formamidopyrimidine.. It carries out the reaction 2'-deoxyribonucleotide-(2'-deoxyribose 5'-phosphate)-2'-deoxyribonucleotide-DNA = a 3'-end 2'-deoxyribonucleotide-(2,3-dehydro-2,3-deoxyribose 5'-phosphate)-DNA + a 5'-end 5'-phospho-2'-deoxyribonucleoside-DNA + H(+). In terms of biological role, involved in base excision repair of DNA damaged by oxidation or by mutagenic agents. Acts as a DNA glycosylase that recognizes and removes damaged bases. Has a preference for oxidized purines, such as 7,8-dihydro-8-oxoguanine (8-oxoG). Has AP (apurinic/apyrimidinic) lyase activity and introduces nicks in the DNA strand. Cleaves the DNA backbone by beta-delta elimination to generate a single-strand break at the site of the removed base with both 3'- and 5'-phosphates. The polypeptide is Formamidopyrimidine-DNA glycosylase (Rhodopseudomonas palustris (strain HaA2)).